The following is a 51-amino-acid chain: Large ribosomal subunit protein bL33 (51 aa).

The segment at 1–23 (MREKIKLESSAGTGHFYTTTKNK) is disordered. Residues 10–20 (SAGTGHFYTTT) are compositionally biased toward polar residues.

This sequence belongs to the bacterial ribosomal protein bL33 family.

The chain is Large ribosomal subunit protein bL33 from Nitrosomonas eutropha (strain DSM 101675 / C91 / Nm57).